The following is a 96-amino-acid chain: MKCFAQIVVLLLVIAFSHGAVITGACDRDVQCGSGTCCAASAWSRNIRFCVPLGNSGEECHPASHKVPYDGKRLSSLCPCKSGLTCSKSGAKFQCS.

The signal sequence occupies residues 1–19 (MKCFAQIVVLLLVIAFSHG). Intrachain disulfides connect Cys26–Cys38, Cys32–Cys50, Cys37–Cys78, Cys60–Cys86, and Cys80–Cys95.

As to expression, expressed by the skin glands.

It localises to the secreted. Its function is as follows. Potent agonist for both PKR1/PROKR1 and PKR2/PROKR2, and inducer of a potent and long-lasting hyperalgesia. Also potentiates capsaicin-induced TRPV1 current, when tested on DRG neurons. At subnanomolar concentrations, this protein both induces potent chemotaxis of macrophages and stimulates LPS-induced production of the pro-inflammatory cytokines IL-1 and IL-12. In vivo, potently stimulates the contraction of the guinea-pig gastrointestinal (GI) smooth muscle (nanomolar concentration). In Bombina orientalis (Oriental fire-bellied toad), this protein is Prokineticin Bo8.